The sequence spans 312 residues: Protoheme IX farnesyltransferase (312 aa).

Helical transmembrane passes span 12 to 32 (LALTKPRVIELLLVATIPAML), 41 to 61 (FGLILLTLIGGWMGAGAANTF), 93 to 113 (VFAWVLLIASVLWLGFLCHSW), 114 to 134 (LAAGFIVLTNWFYVFVYTKWL), 141 to 161 (NVIWGGAAGCMPVIVGWAVIT), 168 to 188 (FHAGWSSWLQAIILFMIIFFW), 240 to 260 (VPAASWIYLAAALISGGWFII), and 290 to 310 (ILFVALSVDAVLGWQTLAHAV).

Belongs to the UbiA prenyltransferase family. Protoheme IX farnesyltransferase subfamily.

The protein localises to the cell membrane. The enzyme catalyses heme b + (2E,6E)-farnesyl diphosphate + H2O = Fe(II)-heme o + diphosphate. The protein operates within porphyrin-containing compound metabolism; heme O biosynthesis; heme O from protoheme: step 1/1. Functionally, converts heme B (protoheme IX) to heme O by substitution of the vinyl group on carbon 2 of heme B porphyrin ring with a hydroxyethyl farnesyl side group. The polypeptide is Protoheme IX farnesyltransferase (Corynebacterium jeikeium (strain K411)).